The primary structure comprises 97 residues: Small ribosomal subunit protein bS20 (97 aa).

It belongs to the bacterial ribosomal protein bS20 family.

In terms of biological role, binds directly to 16S ribosomal RNA. The protein is Small ribosomal subunit protein bS20 of Prochlorococcus marinus (strain MIT 9301).